Consider the following 486-residue polypeptide: Bile acid receptor (486 aa).

Residue lysine 132 forms a Glycyl lysine isopeptide (Lys-Gly) (interchain with G-Cter in SUMO1) linkage. The segment at residues 134-209 is a DNA-binding region (nuclear receptor); the sequence is DELCVVCGDR…MGMLAECMYT (76 aa). An NR C4-type zinc finger spans residues 137–157; the sequence is CVVCGDRASGYHYNALTCEGC. 2 positions are modified to phosphoserine; by PKC/PRKCA: serine 145 and serine 164. At lysine 167 the chain carries N6-acetyllysine; by EP300. The segment at 173–197 adopts an NR C4-type zinc-finger fold; it reads CKNGGNCVMDMYMRRKCQECRLRKC. Lysine 220 carries the post-translational modification N6-methyllysine; by SETD7. Position 227 is an N6-acetyllysine; by EP300 (lysine 227). The NR LBD domain maps to 262-486; it reads DQQTLLHFIM…PLLCEIWDVQ (225 aa). Residue lysine 289 forms a Glycyl lysine isopeptide (Lys-Gly) (interchain with G-Cter in SUMO1) linkage. Arginine 345, tyrosine 375, and tyrosine 383 together coordinate chenodeoxycholate. The residue at position 456 (threonine 456) is a Phosphothreonine; by PKC/PRKCZ. Chenodeoxycholate is bound at residue histidine 461.

This sequence belongs to the nuclear hormone receptor family. NR1 subfamily. In terms of assembly, heterodimer (via C-terminus) with RXRA (via DBD); the heterodimerization enhances the binding affinity for LXXLL motifs from coactivators. Binds DNA predominantly as a heterodimer with RXRA. After activation by agonist binding interacts with coactivators. Interacts with NCOA1, NCOA2, PPARGC1A, CARM1, SETD7, PRMT1, GPS2, SMARCA4 and MED1. Interacts with EP300 and SMARCD1. Interacts with XRCC5 and XRCC6; decreasing NR1H4/FXR transactivation activity towards ABCB11/BSEP. Interacts with PAGR1 and NCOA6; indicative for an association with an MLL2/MLL3 complex (ASCOM). Acetylated by EP300. Lys-227 as is the major acetylation site for EP300; the dynamicly regulated acetylation inhibits heterodimerization with RXRA and transactivation activity. Deacetylated by SIRT1. Post-translationally, methylation may increase transactivation of target genes. In terms of processing, phosphorylation by PKC/PRKCA increases transactivation activity by promoting association with PPARGC1A. Sumoylated upon ligand binding. As to expression, liver and hepatocyte-related cells express mainly FXRalpha1-type isoforms with isoform 3 and isoform 4 in approximately equal proportions. In intestine and kidney mainly FXRalpha2-type isoforms are expressed with isoform 1 and isoform 2 in approximately equal proportions. Expressed in pancreatic beta cells and macrophages.

It localises to the nucleus. Ligand-activated transcription factor. Receptor for bile acids (BAs) such as chenodeoxycholic acid (CDCA), lithocholic acid, deoxycholic acid (DCA) and allocholic acid (ACA). Plays a essential role in BA homeostasis through the regulation of genes involved in BA synthesis, conjugation and enterohepatic circulation. Also regulates lipid and glucose homeostasis and is involved innate immune response. The FXR-RXR heterodimer binds predominantly to farnesoid X receptor response elements (FXREs) containing two inverted repeats of the consensus sequence 5'-AGGTCA-3' in which the monomers are spaced by 1 nucleotide (IR-1) but also to tandem repeat DR1 sites with lower affinity, and can be activated by either FXR or RXR-specific ligands. It is proposed that monomeric nuclear receptors such as NR5A2/LRH-1 bound to coregulatory nuclear responsive element (NRE) halfsites located in close proximity to FXREs modulate transcriptional activity. In the liver activates transcription of the corepressor NR0B2 thereby indirectly inhibiting CYP7A1 and CYP8B1 (involved in BA synthesis) implicating at least in part histone demethylase KDM1A resulting in epigenomic repression, and SLC10A1/NTCP (involved in hepatic uptake of conjugated BAs). Activates transcription of the repressor MAFG (involved in regulation of BA synthesis). Activates transcription of SLC27A5/BACS and BAAT (involved in BA conjugation), ABCB11/BSEP (involved in bile salt export) by directly recruiting histone methyltransferase CARM1, and ABCC2/MRP2 (involved in secretion of conjugated BAs) and ABCB4 (involved in secretion of phosphatidylcholine in the small intestine). Activates transcription of SLC27A5/BACS and BAAT (involved in BA conjugation), ABCB11/BSEP (involved in bile salt export) by directly recruiting histone methyltransferase CARM1, and ABCC2/MRP2 (involved in secretion of conjugated BAs) and ABCB4 (involved in secretion of phosphatidylcholine in the small intestine). In the intestine activates FGF19 expression and secretion leading to hepatic CYP7A1 repression. The function also involves the coordinated induction of hepatic KLB/beta-klotho expression. Regulates transcription of liver UGT2B4 and SULT2A1 involved in BA detoxification; binding to the UGT2B4 promoter seems to imply a monomeric transactivation independent of RXRA. Modulates lipid homeostasis by activating liver NR0B2/SHP-mediated repression of SREBF1 (involved in de novo lipogenesis), expression of PLTP (involved in HDL formation), SCARB1 (involved in HDL hepatic uptake), APOE, APOC1, APOC4, PPARA (involved in beta-oxidation of fatty acids), VLDLR and SDC1 (involved in the hepatic uptake of LDL and IDL remnants), and inhibiting expression of MTTP (involved in VLDL assembly. Increases expression of APOC2 (promoting lipoprotein lipase activity implicated in triglyceride clearance). Transrepresses APOA1 involving a monomeric competition with NR2A1 for binding to a DR1 element. Also reduces triglyceride clearance by inhibiting expression of ANGPTL3 and APOC3 (both involved in inhibition of lipoprotein lipase). Involved in glucose homeostasis by modulating hepatic gluconeogenesis through activation of NR0B2/SHP-mediated repression of respective genes. Modulates glycogen synthesis (inducing phosphorylation of glycogen synthase kinase-3). Modulates glucose-stimulated insulin secretion and is involved in insulin resistance. Involved in intestinal innate immunity. Plays a role in protecting the distal small intestine against bacterial overgrowth and preservation of the epithelial barrier. Down-regulates inflammatory cytokine expression in several types of immune cells including macrophages and mononuclear cells. Mediates trans-repression of TLR4-induced cytokine expression; the function seems to require its sumoylation and prevents N-CoR nuclear receptor corepressor clearance from target genes such as IL1B and NOS2. Involved in the TLR9-mediated protective mechanism in intestinal inflammation. Plays an anti-inflammatory role in liver inflammation; proposed to inhibit pro-inflammatory (but not antiapoptotic) NF-kappa-B signaling). Functionally, promotes transcriptional activation of target genes NR0B2/SHP (inducible by unconjugated CDCA), SLC51B/OSTB (inducible by unconjugated CDCA and DCA) and FABP6/IBAP; low activity for ABCB11/BSEP (inducible by unconjugated CDCA, DCA and ACA); not inducible by taurine- and glycine-amidated CDCA. In terms of biological role, promotes transcriptional activation of target genes ABCB11/BSEP (inducible by unconjugated CDCA, DCA and ACA), NR0B2/SHP (inducible by unconjugated CDCA DCA and ACA), SLC51B/OSTB (inducible by unconjugated CDCA and DCA) and FABP6/IBAP; not inducible by taurine- and glycine-amidated CDCA. Its function is as follows. Promotes transcriptional activation of target genes NR0B2/SHP (inducible by unconjugated CDCA), SLC51B/OSTB (inducible by unconjugated CDCA and DCA) and IBAP; low activity for ABCB11/BSEP (inducible by unconjugated CDCA, DCA and ACA); not inducible by taurine- and glycine-amidated CDCA. Promotes transcriptional activation of target genes ABCB11/BSEP (inducible by unconjugated CDCA, ACA and DCA), NR0B2/SHP (inducible by unconjugated CDCA, ACA and DCA), SLC51B/OSTB (inducible by unconjugated CDCA and DCA) and FABP6/IBAP; most efficient isoform compared to isoforms 1 to 3; not inducible by taurine- and glycine-amidated CDCA. The sequence is that of Bile acid receptor (NR1H4) from Homo sapiens (Human).